We begin with the raw amino-acid sequence, 204 residues long: N-(5'-phosphoribosyl)anthranilate isomerase (204 aa).

Belongs to the TrpF family.

It catalyses the reaction N-(5-phospho-beta-D-ribosyl)anthranilate = 1-(2-carboxyphenylamino)-1-deoxy-D-ribulose 5-phosphate. The protein operates within amino-acid biosynthesis; L-tryptophan biosynthesis; L-tryptophan from chorismate: step 3/5. The protein is N-(5'-phosphoribosyl)anthranilate isomerase of Oceanobacillus iheyensis (strain DSM 14371 / CIP 107618 / JCM 11309 / KCTC 3954 / HTE831).